We begin with the raw amino-acid sequence, 238 residues long: Protein shisa-3 homolog (238 aa).

A signal peptide spans 1–21 (MGALLAFCLLVGLLRWGPAGA). Over 22-98 (QQPGEYCHGW…GITAQPVYVP (77 aa)) the chain is Lumenal. The helical transmembrane segment at 99–119 (FLIVGSIFIAFIILGSLVAIY) threads the bilayer. Topologically, residues 120 to 238 (CCTCLRPKEP…GKSCPDFSSS (119 aa)) are cytoplasmic.

Belongs to the shisa family.

It is found in the endoplasmic reticulum membrane. Its function is as follows. Plays an essential role in the maturation of presomitic mesoderm cells by individual attenuation of both FGF and WNT signaling. This is Protein shisa-3 homolog (Shisa3) from Mus musculus (Mouse).